Consider the following 545-residue polypeptide: Esterase-5C (545 aa).

A signal peptide spans 1–19 (MLAARLIILLSFYWLSASA). A disulfide bridge links Cys84 with Cys103. An N-linked (GlcNAc...) asparagine glycan is attached at Asn113. Ser207 functions as the Acyl-ester intermediate in the catalytic mechanism. Residues Cys259 and Cys271 are joined by a disulfide bond. An N-linked (GlcNAc...) asparagine glycan is attached at Asn421. Catalysis depends on His467, which acts as the Charge relay system. An N-linked (GlcNAc...) asparagine glycan is attached at Asn507. Residues Cys515 and Cys536 are joined by a disulfide bond.

The protein belongs to the type-B carboxylesterase/lipase family.

It localises to the secreted. It catalyses the reaction a carboxylic ester + H2O = an alcohol + a carboxylate + H(+). The polypeptide is Esterase-5C (Est-5C) (Drosophila pseudoobscura pseudoobscura (Fruit fly)).